We begin with the raw amino-acid sequence, 267 residues long: Chlorophyll a-b binding protein 3B, chloroplastic (267 aa).

The transit peptide at 1–34 directs the protein to the chloroplast; sequence MAASTMALSSSTFAGKAVKLSPSSSEISGNGRIT. Residues 19–52 are disordered; that stretch reads KLSPSSSEISGNGRITMRKTAAKPKPASSGSPWX. The helical transmembrane segment at 153–173 threads the bilayer; sequence LVHAQSILAIWACQVVLMGAV. The chlorophyll b site is built by Val154, Ser158, Gln166, Glu174, Arg177, and Leu183. Chlorophyll a is bound by residues Lys214, Glu215, Asn218, Arg220, Gln232, His247, and Ala256. A helical transmembrane segment spans residues 221–241; it reads LAMFSMFGFFVQAIVTGKGPL. Phe263 lines the chlorophyll b pocket.

Belongs to the light-harvesting chlorophyll a/b-binding (LHC) protein family. In terms of assembly, the LHC complex consists of chlorophyll a-b binding proteins. Requires Binds at least 14 chlorophylls (8 Chl-a and 6 Chl-b) and carotenoids such as lutein and neoxanthin. as cofactor. Post-translationally, photoregulated by reversible phosphorylation of its threonine residues.

It localises to the plastid. It is found in the chloroplast thylakoid membrane. The light-harvesting complex (LHC) functions as a light receptor, it captures and delivers excitation energy to photosystems with which it is closely associated. This Solanum lycopersicum (Tomato) protein is Chlorophyll a-b binding protein 3B, chloroplastic (CAB3B).